The sequence spans 160 residues: Transcription elongation factor GreA (160 aa).

Positions 2 to 81 form a coiled coil; that stretch reads AEKKNILTYE…KNAEVVVEDE (80 aa). Residues 36 to 55 are disordered; that stretch reads KEAREQGDLSENAEYDAAKD.

This sequence belongs to the GreA/GreB family.

Its function is as follows. Necessary for efficient RNA polymerase transcription elongation past template-encoded arresting sites. The arresting sites in DNA have the property of trapping a certain fraction of elongating RNA polymerases that pass through, resulting in locked ternary complexes. Cleavage of the nascent transcript by cleavage factors such as GreA or GreB allows the resumption of elongation from the new 3'terminus. GreA releases sequences of 2 to 3 nucleotides. This Lachnoclostridium phytofermentans (strain ATCC 700394 / DSM 18823 / ISDg) (Clostridium phytofermentans) protein is Transcription elongation factor GreA.